The following is a 286-amino-acid chain: S-adenosylmethionine-dependent methyltransferase UmaA (286 aa).

Residues 32–33, 67–75, 93–98, and 122–123 contribute to the S-adenosyl-L-methionine site; these read YT, LLDIGCGWG, TLSRNQ, and WD. The active site involves Cys268.

Belongs to the CFA/CMAS family.

Its subcellular location is the cytoplasm. Functionally, methyltransferase that modifies short-chain fatty acids. In vitro, catalyzes the transfer of the methyl group from S-adenosyl-L-methionine (SAM) to the double bond of phospholipid-linked oleic acid to produce tuberculostearic acid (10-methylstearic-acid or TSA). The protein is S-adenosylmethionine-dependent methyltransferase UmaA of Mycobacterium tuberculosis (strain ATCC 25618 / H37Rv).